Here is a 312-residue protein sequence, read N- to C-terminus: Pimeloyl-[acyl-carrier protein] methyl ester esterase (312 aa).

Residues 17–241 (VYLIHGWGAN…KAAHAPFLSH (225 aa)) form the AB hydrolase-1 domain. Residues W23, 83 to 84 (SL), and 145 to 149 (FLQLQ) each bind substrate. Catalysis depends on S83, which acts as the Nucleophile. Catalysis depends on residues D207 and H235. Position 235 (H235) interacts with substrate.

Belongs to the AB hydrolase superfamily. Carboxylesterase BioH family. Monomer.

It localises to the cytoplasm. The catalysed reaction is 6-carboxyhexanoyl-[ACP] methyl ester + H2O = 6-carboxyhexanoyl-[ACP] + methanol + H(+). It participates in cofactor biosynthesis; biotin biosynthesis. Functionally, the physiological role of BioH is to remove the methyl group introduced by BioC when the pimeloyl moiety is complete. It allows to synthesize pimeloyl-ACP via the fatty acid synthetic pathway through the hydrolysis of the ester bonds of pimeloyl-ACP esters. The chain is Pimeloyl-[acyl-carrier protein] methyl ester esterase from Neisseria meningitidis serogroup A / serotype 4A (strain DSM 15465 / Z2491).